Reading from the N-terminus, the 345-residue chain is Histone H3-like centromeric protein cpar-1 (345 aa).

The disordered stretch occupies residues 117-246; it reads NHSNRKPLEE…SRVTKTHNRK (130 aa). The segment covering 122–149 has biased composition (basic and acidic residues); sequence KPLEESRRREEPRDRVHESNIDITHRGD. A compositionally biased stretch (basic residues) spans 233 to 246; it reads RSGKSRVTKTHNRK. The interval 263 to 340 is H3-like; that stretch reads STDMLIQKAP…TDIQLYRRLC (78 aa).

It belongs to the histone H3 family. In terms of assembly, forms a nucleosome-like histone octamer containing two molecules each of H2A, H2B, cpar-1 and H4 assembled in one cpar-1-H4 heterotetramer and two H2A-H2B heterodimers. Cleaved at the onset of meiotic anaphase I, likely by separase sep-1.

It is found in the nucleus. The protein resides in the chromosome. In terms of biological role, histone H3-like variant which exclusively replaces conventional H3 in the nucleosome core of centromeric chromatin at the inner plate of the kinetochore. Required for recruitment and assembly of kinetochore proteins, mitotic progression and chromosome segregation. May serve as an epigenetic mark that propagates centromere identity through replication and cell division. Not required for chromosome segregation during meiosis. The chain is Histone H3-like centromeric protein cpar-1 from Caenorhabditis briggsae.